The following is a 249-amino-acid chain: Aspartate/glutamate leucyltransferase (249 aa).

This sequence belongs to the R-transferase family. Bpt subfamily.

The protein resides in the cytoplasm. It catalyses the reaction N-terminal L-glutamyl-[protein] + L-leucyl-tRNA(Leu) = N-terminal L-leucyl-L-glutamyl-[protein] + tRNA(Leu) + H(+). It carries out the reaction N-terminal L-aspartyl-[protein] + L-leucyl-tRNA(Leu) = N-terminal L-leucyl-L-aspartyl-[protein] + tRNA(Leu) + H(+). Functionally, functions in the N-end rule pathway of protein degradation where it conjugates Leu from its aminoacyl-tRNA to the N-termini of proteins containing an N-terminal aspartate or glutamate. This Brucella suis (strain ATCC 23445 / NCTC 10510) protein is Aspartate/glutamate leucyltransferase.